Here is a 168-residue protein sequence, read N- to C-terminus: Ribosome maturation factor RimP (168 aa).

This sequence belongs to the RimP family.

It is found in the cytoplasm. Functionally, required for maturation of 30S ribosomal subunits. This Syntrophobacter fumaroxidans (strain DSM 10017 / MPOB) protein is Ribosome maturation factor RimP.